The following is a 291-amino-acid chain: Flavonol synthase/flavanone 3-hydroxylase (291 aa).

Positions 151–250 (CWYVMNINHY…RMSWPVLVSP (100 aa)) constitute a Fe2OG dioxygenase domain. Fe cation-binding residues include His-175, Asp-177, and His-231.

It belongs to the iron/ascorbate-dependent oxidoreductase family. The cofactor is L-ascorbate. Fe cation is required as a cofactor.

Its subcellular location is the cytoplasm. It catalyses the reaction a (2R,3R)-dihydroflavonol + 2-oxoglutarate + O2 = a flavonol + succinate + CO2 + H2O. The catalysed reaction is a (2S)-flavan-4-one + 2-oxoglutarate + O2 = a (2R,3R)-dihydroflavonol + succinate + CO2. The protein operates within secondary metabolite biosynthesis; flavonoid biosynthesis. Its function is as follows. Catalyzes the formation of flavonols from dihydroflavonols. It can act on dihydrokaempferol to produce kaempferol, on dihydroquercetin to produce quercitin and on dihydromyricetin to produce myricetin. This is Flavonol synthase/flavanone 3-hydroxylase from Matthiola incana (Common stock).